Here is a 478-residue protein sequence, read N- to C-terminus: Cytochrome c-552 (478 aa).

An N-terminal signal peptide occupies residues 1 to 26; it reads MTRIKINARRIFSLLIPFFFFTSVHA. Residue His-94 coordinates heme c. Residues Cys-122, Cys-125, and Lys-126 each contribute to the heme site. Heme c-binding residues include Cys-160, Cys-163, His-164, Cys-209, Cys-212, and His-213. Residues Glu-215, Tyr-216, Lys-261, and Gln-263 each coordinate Ca(2+). Tyr-216 contributes to the substrate binding site. His-264 contacts substrate. Heme c contacts are provided by His-275, Cys-282, Cys-285, His-286, His-301, Cys-314, Cys-317, His-318, and His-393.

The protein belongs to the cytochrome c-552 family. Ca(2+) is required as a cofactor. Heme c serves as cofactor.

The protein resides in the periplasm. It carries out the reaction 6 Fe(III)-[cytochrome c] + NH4(+) + 2 H2O = 6 Fe(II)-[cytochrome c] + nitrite + 8 H(+). Its pathway is nitrogen metabolism; nitrate reduction (assimilation). Catalyzes the reduction of nitrite to ammonia, consuming six electrons in the process. In Escherichia coli O6:H1 (strain CFT073 / ATCC 700928 / UPEC), this protein is Cytochrome c-552.